We begin with the raw amino-acid sequence, 221 residues long: Large ribosomal subunit protein uL4 (221 aa).

Residues 48-77 (TASTKTRGEVSGGGRKPWIQKHTGRARQGS) are disordered.

Belongs to the universal ribosomal protein uL4 family. Part of the 50S ribosomal subunit.

One of the primary rRNA binding proteins, this protein initially binds near the 5'-end of the 23S rRNA. It is important during the early stages of 50S assembly. It makes multiple contacts with different domains of the 23S rRNA in the assembled 50S subunit and ribosome. Functionally, forms part of the polypeptide exit tunnel. This is Large ribosomal subunit protein uL4 from Thermosipho africanus (strain TCF52B).